The chain runs to 161 residues: Nucleotide-binding protein Bphy_0527 (161 aa).

Belongs to the YajQ family.

Nucleotide-binding protein. This Paraburkholderia phymatum (strain DSM 17167 / CIP 108236 / LMG 21445 / STM815) (Burkholderia phymatum) protein is Nucleotide-binding protein Bphy_0527.